A 71-amino-acid polypeptide reads, in one-letter code: Small ribosomal subunit protein bS21 (71 aa).

It belongs to the bacterial ribosomal protein bS21 family.

In Dichelobacter nodosus (strain VCS1703A), this protein is Small ribosomal subunit protein bS21.